A 242-amino-acid polypeptide reads, in one-letter code: U1 small nuclear ribonucleoprotein C (242 aa).

Residues 3–35 (YLGDYCDVYLTHDSMSVRKAHNSGRNHLRNVVE) form a Matrin-type; degenerate zinc finger. A disordered region spans residues 60–242 (GQASSNPMLQ…SSPGPSQEGK (183 aa)). 4 stretches are compositionally biased toward pro residues: residues 90-107 (MLPPPPPFGMPGAPPGAP), 136-149 (PPMPGDLPPPPLPN), 156-183 (PFPPPNGFPPNFQFPPPGAAGFPPPPIP), and 201-213 (PVPPPGFPLPGAP). Polar residues predominate over residues 231-242 (PASSPGPSQEGK).

This sequence belongs to the U1 small nuclear ribonucleoprotein C family. In terms of assembly, U1 snRNP is composed of the 7 core Sm proteins B/B', D1, D2, D3, E, F and G that assemble in a heptameric protein ring on the Sm site of the small nuclear RNA to form the core snRNP, and at least 3 U1 snRNP-specific proteins U1-70K, U1-A and U1-C. U1-C interacts with U1 snRNA and the 5' splice-site region of the pre-mRNA.

The protein localises to the nucleus. Its function is as follows. Component of the spliceosomal U1 snRNP, which is essential for recognition of the pre-mRNA 5' splice-site and the subsequent assembly of the spliceosome. U1-C is directly involved in initial 5' splice-site recognition for both constitutive and regulated alternative splicing. The interaction with the 5' splice-site seems to precede base-pairing between the pre-mRNA and the U1 snRNA. Stimulates commitment or early (E) complex formation by stabilizing the base pairing of the 5' end of the U1 snRNA and the 5' splice-site region. The protein is U1 small nuclear ribonucleoprotein C of Ajellomyces capsulatus (strain G186AR / H82 / ATCC MYA-2454 / RMSCC 2432) (Darling's disease fungus).